The primary structure comprises 350 residues: Phosphotriesterase-related protein (350 aa).

Histidine 22, histidine 24, glutamate 169, histidine 201, histidine 230, and aspartate 298 together coordinate a divalent metal cation.

This sequence belongs to the metallo-dependent hydrolases superfamily. Phosphotriesterase family. The cofactor is a divalent metal cation.

The protein is Phosphotriesterase-related protein of Drosophila yakuba (Fruit fly).